The sequence spans 399 residues: Transcription factor UNE10 (399 aa).

Disordered stretches follow at residues 119–158 (QSKP…GSQR) and 173–228 (MGSH…RRDK). A compositionally biased stretch (basic and acidic residues) spans 178–201 (NTIDDHDSVCHSRPQMEDEEEKKA). In terms of domain architecture, bHLH spans 213-262 (RAAAIHNQSERKRRDKINQRMKTLQKLVPNSSKTDKASMLDEVIEYLKQL).

In terms of assembly, homodimer. Associates to PTAC12/HMR/PAP5 which acts as a transcriptional coactivator. Interacts with the Pfr form of phyB but barely with that of phyA. Binds to COP1. Ubiquitinated and subsequently targeted to protein degradation by COP1 in the dark, but not in far-red light. As to expression, mainly expressed in stems, leaves, seedlings, fruits and flowers, and, to a lower extent, in roots.

It localises to the nucleus. Stabilized by phyA but destabilized by phyB. Accumulates in the dark but not in far-red light upon MG132 treatment, a 26S proteasome inhibitor (at protein level). Its function is as follows. Transcription factor binding to G-box elements (5'-CACGTG-3') in target genes promoters, particularly in far-red light but barely in the dark. Required during the fertilization of ovules by pollen. Repressor of phytochrome A-mediated far-red light responses including seed germination, suppression of hypocotyl elongation, and randomization of hypocotyl growth orientation. Does not inhibit phyB-induced red light responses. The sequence is that of Transcription factor UNE10 from Arabidopsis thaliana (Mouse-ear cress).